Reading from the N-terminus, the 783-residue chain is Ubiquitin carboxyl-terminal hydrolase 1 (783 aa).

Disordered stretches follow at residues 1-22 (MPGV…KKNR) and 34-55 (KRAL…YKGS). Polar residues predominate over residues 7–16 (SESNGLSRGS). Serine 16 and serine 42 each carry phosphoserine. The span at 45 to 55 (NEEKTSEYKGS) shows a compositional bias: basic and acidic residues. Serine 67 is subject to Phosphoserine. Residues 81–783 (VGLNNLGNTC…TPYLLFYKKL (703 aa)) enclose the USP domain. Cysteine 90 (nucleophile) is an active-site residue. The tract at residues 234 to 311 (EEYQKEEMSD…RKAAGDTLEI (78 aa)) is disordered. Basic and acidic residues-rich tracts occupy residues 250-273 (DNMR…KSDA) and 284-296 (ISKE…ENQR). Serine 473 is modified (phosphoserine). Histidine 591 (proton acceptor) is an active-site residue. The disordered stretch occupies residues 685 to 722 (PDKVASTALPENRNSETNNTNGTDESDSNKESSDQTGI). Serine 766 is subject to Phosphoserine.

It belongs to the peptidase C19 family. As to quaternary structure, interacts with FANCD2 and PCNA. Interacts with WDR48. Interacts with ATAD5; the interaction regulates USP1-mediated PCNA deubiquitination. In terms of processing, autocatalytic cleavage of USP1 following UV irradiation inactivates it, leading to an increase in ubiquitinated PCNA, recruitment of POLH and translesion synthesis. Ubiquitinated by the CRL2(KLHDC2) complex following autocatalytic cleavage, leading to its degradation: the CRL2(KLHDC2) complex recognizes the diglycine (Gly-Gly) at the C-terminus.

The protein localises to the nucleus. It carries out the reaction Thiol-dependent hydrolysis of ester, thioester, amide, peptide and isopeptide bonds formed by the C-terminal Gly of ubiquitin (a 76-residue protein attached to proteins as an intracellular targeting signal).. Functionally, negative regulator of DNA damage repair which specifically deubiquitinates monoubiquitinated FANCD2. Also involved in PCNA-mediated translesion synthesis (TLS) by deubiquitinating monoubiquitinated PCNA. Has almost no deubiquitinating activity by itself and requires the interaction with WDR48 to have a high activity. This Bos taurus (Bovine) protein is Ubiquitin carboxyl-terminal hydrolase 1.